The primary structure comprises 223 residues: Thiamine-phosphate synthase (223 aa).

4-amino-2-methyl-5-(diphosphooxymethyl)pyrimidine-binding positions include 45–49 (QYREK) and Asn77. Mg(2+) contacts are provided by Asp78 and Asp97. 4-amino-2-methyl-5-(diphosphooxymethyl)pyrimidine is bound at residue Thr116. 2-[(2R,5Z)-2-carboxy-4-methylthiazol-5(2H)-ylidene]ethyl phosphate is bound at residue 142-144 (SYT). A 4-amino-2-methyl-5-(diphosphooxymethyl)pyrimidine-binding site is contributed by Lys145. 2-[(2R,5Z)-2-carboxy-4-methylthiazol-5(2H)-ylidene]ethyl phosphate-binding positions include Gly173 and 193–194 (VT).

This sequence belongs to the thiamine-phosphate synthase family. It depends on Mg(2+) as a cofactor.

The enzyme catalyses 2-[(2R,5Z)-2-carboxy-4-methylthiazol-5(2H)-ylidene]ethyl phosphate + 4-amino-2-methyl-5-(diphosphooxymethyl)pyrimidine + 2 H(+) = thiamine phosphate + CO2 + diphosphate. The catalysed reaction is 2-(2-carboxy-4-methylthiazol-5-yl)ethyl phosphate + 4-amino-2-methyl-5-(diphosphooxymethyl)pyrimidine + 2 H(+) = thiamine phosphate + CO2 + diphosphate. It catalyses the reaction 4-methyl-5-(2-phosphooxyethyl)-thiazole + 4-amino-2-methyl-5-(diphosphooxymethyl)pyrimidine + H(+) = thiamine phosphate + diphosphate. It participates in cofactor biosynthesis; thiamine diphosphate biosynthesis; thiamine phosphate from 4-amino-2-methyl-5-diphosphomethylpyrimidine and 4-methyl-5-(2-phosphoethyl)-thiazole: step 1/1. Functionally, condenses 4-methyl-5-(beta-hydroxyethyl)thiazole monophosphate (THZ-P) and 2-methyl-4-amino-5-hydroxymethyl pyrimidine pyrophosphate (HMP-PP) to form thiamine monophosphate (TMP). The sequence is that of Thiamine-phosphate synthase from Dictyoglomus turgidum (strain DSM 6724 / Z-1310).